We begin with the raw amino-acid sequence, 368 residues long: Guanylate binding protein 128up (368 aa).

K22 is subject to (3S)-3-hydroxylysine. Residues 65-290 (ARVGFVGFPS…LLELMWEYLR (226 aa)) form the OBG-type G domain. Residues 71–78 (GFPSVGKS), 117–121 (DLPGI), and 248–251 (NKID) contribute to the GTP site. The TGS domain maps to 290–366 (RLQRIYTKPK…NDEDVVQIVK (77 aa)).

This sequence belongs to the TRAFAC class OBG-HflX-like GTPase superfamily. OBG GTPase family. In terms of processing, hydroxylated (with S stereochemistry) at C-3 of Lys-22 by JMJD7. As to expression, expressed in posterior-lateral epidermis of the maxillary lobe.

Functionally, catalyzes the conversion of GTP to GDP through hydrolysis of the gamma-phosphate bond in GTP. Dfd/deformed is required to activate 128up in maxillary segment cells. The sequence is that of Guanylate binding protein 128up from Drosophila melanogaster (Fruit fly).